Here is a 375-residue protein sequence, read N- to C-terminus: Trichodiene synthase (375 aa).

The protein belongs to the trichodiene synthase family.

The enzyme catalyses (2E,6E)-farnesyl diphosphate = trichodiene + diphosphate. The protein operates within sesquiterpene biosynthesis; trichothecene biosynthesis. In terms of biological role, TS is a member of the terpene cyclase group of enzymes. It catalyzes the isomerization and cyclization of farnesyl pyro-phosphate to form trichodiene, the first cyclic intermediate in the biosynthetic pathway for trichothecenes. It serves to branch trichothecene biosynthesis from the isoprenoid pathway. The polypeptide is Trichodiene synthase (TRI5) (Fusarium culmorum).